Consider the following 396-residue polypeptide: Phosphoglycerate kinase (396 aa).

Substrate contacts are provided by residues 21–23, Arg-36, 59–62, Arg-118, and Arg-151; these read DLN and HFDR. ATP-binding positions include Lys-201, Glu-323, and 353–356; that span reads GGDT.

Belongs to the phosphoglycerate kinase family. In terms of assembly, monomer.

Its subcellular location is the cytoplasm. The enzyme catalyses (2R)-3-phosphoglycerate + ATP = (2R)-3-phospho-glyceroyl phosphate + ADP. Its pathway is carbohydrate degradation; glycolysis; pyruvate from D-glyceraldehyde 3-phosphate: step 2/5. This chain is Phosphoglycerate kinase, found in Granulibacter bethesdensis (strain ATCC BAA-1260 / CGDNIH1).